The sequence spans 910 residues: MLNFTGQTRRRNVNLGNRTRNSKKDLLEKAKRERERRAQDKLKEDASKTIQKSIRRHFSNVRLFKNTFTSSQLVHMIPAYGGKLIYYISQYDLQQLLKLSHNFLSSYPNSLGNRQLLSLLKLYQDDALVAETLSDLNMDCPTVDEFLDSLSVYLCRASFLSYSSASKLADVIEAWEVMHSSASISIFSISIGSYEKRPFALQFYCILAERNLLPQLINTNPILWDNMAKTYSHCSKGGQKNIAKLLIPNFNNHIAPSVLRSDNDYVLKFYEKAFIDEVIATTANYVSDEDHVKNLMCYIASSPNQSCKNSVLITLLSNKDFVRRLSWEFFHTKFNASKTEAHPLFSVLAQLIDMHLLISTDRELLDYNSVIPIEELKKFTSTLKDFTFRQYWELPKSERNPMLKEAVPLLSKVYERDSRLHFLSTENNPTYWENSEKQFLNLRFYEELQEYEDLYREHLEEESDEDMEKEIDLDKERPPLKSLLLNKMKKRLKSSLRFRKLEILLELPFFIPFEERVDLFYMFIALDKKRLSLDDDHNLINMFTPWASTGMRKQSAIISRDNVLEDAFNAFNSIGERFKASLDVTFINEFGEEAGIDGGGITKEFLTTVSDEGFKDPKHELFRTNDRYELYPSVVYDATKLKYIWFLGKVVGKCLYEHVLIDVSFADFFLKKLLNYSNGFLSSFSDLGSYDSVLYNNLIKLLNMTTDEIKSLDLTFEIDEPESSAKVVDLIPNGSKTYVTKDNVLLYVTKVTDYKLNKRCFKPVSAFHGGLSVIIAPHWMEMFNSIELQMLISGERDNIDLDDLKSNTEYGGYKEEDQTIVDFWEVLNEFKFEEKLNFLKFVTSVPQAPLQGFKALDPKFGIRNAGTEKYRLPTASTCVNLLKLPDYRNKTILREKLLYAINSGARFDLS.

Met-1 bears the N-acetylmethionine mark. The interval 1-25 (MLNFTGQTRRRNVNLGNRTRNSKKD) is disordered. In terms of domain architecture, HECT spans 810-910 (YGGYKEEDQT…INSGARFDLS (101 aa)). Residue Cys-878 is the Glycyl thioester intermediate of the active site.

It belongs to the UBE3C family. Interacts with 19S proteasomes.

It localises to the cytoplasm. The protein resides in the cytosol. Its subcellular location is the nucleus. It catalyses the reaction S-ubiquitinyl-[E2 ubiquitin-conjugating enzyme]-L-cysteine + [acceptor protein]-L-lysine = [E2 ubiquitin-conjugating enzyme]-L-cysteine + N(6)-ubiquitinyl-[acceptor protein]-L-lysine.. Its pathway is protein modification; protein ubiquitination. Its function is as follows. Non-essential E3 ubiquitin-protein ligase that specifically catalyzes 'Lys-29'- and 'Lys-48'-linked polyubiquitin chains. Accepts ubiquitin from an E2 ubiquitin-conjugating enzyme in the form of a thioester and then directly transfers the ubiquitin to targeted substrates. Associates with the proteasome and promotes elongation of ubiquitin chains on substrates bound to the proteasome. Elongation of ubiquitin chains on substrates bound to the proteasome promotes proteasomal processivity. Also promotes ubiquitin elongation of 26S proteasome subunit RPN10. Involved in the stress response required to maintain cell fitness following heat-shock: acts by mediating ubiquitination of cytosolic misfolded proteins, leading to their subsequent degradation. The protein is E3 ubiquitin-protein ligase HUL5 of Saccharomyces cerevisiae (strain ATCC 204508 / S288c) (Baker's yeast).